Reading from the N-terminus, the 382-residue chain is 1-deoxy-D-xylulose 5-phosphate reductoisomerase (382 aa).

6 residues coordinate NADPH: Thr-10, Gly-11, Ser-12, Ile-13, Asn-38, and Asn-120. Lys-121 is a 1-deoxy-D-xylulose 5-phosphate binding site. Glu-122 serves as a coordination point for NADPH. Asp-146 is a Mn(2+) binding site. The 1-deoxy-D-xylulose 5-phosphate site is built by Ser-147, Glu-148, Ser-172, and His-195. Residue Glu-148 participates in Mn(2+) binding. An NADPH-binding site is contributed by Gly-201. The 1-deoxy-D-xylulose 5-phosphate site is built by Ser-208, Asn-213, Lys-214, and Glu-217. Glu-217 serves as a coordination point for Mn(2+).

The protein belongs to the DXR family. Mg(2+) is required as a cofactor. The cofactor is Mn(2+).

The catalysed reaction is 2-C-methyl-D-erythritol 4-phosphate + NADP(+) = 1-deoxy-D-xylulose 5-phosphate + NADPH + H(+). It functions in the pathway isoprenoid biosynthesis; isopentenyl diphosphate biosynthesis via DXP pathway; isopentenyl diphosphate from 1-deoxy-D-xylulose 5-phosphate: step 1/6. In terms of biological role, catalyzes the NADPH-dependent rearrangement and reduction of 1-deoxy-D-xylulose-5-phosphate (DXP) to 2-C-methyl-D-erythritol 4-phosphate (MEP). The polypeptide is 1-deoxy-D-xylulose 5-phosphate reductoisomerase (Thermoanaerobacter sp. (strain X514)).